Reading from the N-terminus, the 166-residue chain is Sec-independent protein translocase protein TatB (166 aa).

The chain crosses the membrane as a helical span at residues 2-22 (FDGIGFMELLLIGVLGLVVLG). The tract at residues 69-166 (SKGLSNLSPE…DTRSNPKANG (98 aa)) is disordered. Composition is skewed to polar residues over residues 88 to 97 (QAAQSVNRPY) and 112 to 132 (QIYS…SQAN). Residues 133–153 (PTATVEASPAPASPATPSEPS) are compositionally biased toward low complexity. Positions 155 to 166 (GADTRSNPKANG) are enriched in polar residues.

It belongs to the TatB family. The Tat system comprises two distinct complexes: a TatABC complex, containing multiple copies of TatA, TatB and TatC subunits, and a separate TatA complex, containing only TatA subunits. Substrates initially bind to the TatABC complex, which probably triggers association of the separate TatA complex to form the active translocon.

It is found in the cell inner membrane. Functionally, part of the twin-arginine translocation (Tat) system that transports large folded proteins containing a characteristic twin-arginine motif in their signal peptide across membranes. Together with TatC, TatB is part of a receptor directly interacting with Tat signal peptides. TatB may form an oligomeric binding site that transiently accommodates folded Tat precursor proteins before their translocation. This Shewanella baltica (strain OS155 / ATCC BAA-1091) protein is Sec-independent protein translocase protein TatB.